Reading from the N-terminus, the 80-residue chain is 17 kDa surface antigen (80 aa).

A compositionally biased stretch (polar residues) spans 47-58 (ALETTPSGTSIE). A disordered region spans residues 47–80 (ALETTPSGTSIEWRNPDNGNYGYVTPSKTYKNST).

It belongs to the rickettsiale 17 kDa surface antigen family.

The protein localises to the cell outer membrane. This Rickettsia canadensis protein is 17 kDa surface antigen (omp).